The chain runs to 235 residues: Large ribosomal subunit protein uL1 (235 aa).

The protein belongs to the universal ribosomal protein uL1 family. As to quaternary structure, part of the 50S ribosomal subunit.

Its function is as follows. Binds directly to 23S rRNA. The L1 stalk is quite mobile in the ribosome, and is involved in E site tRNA release. Functionally, protein L1 is also a translational repressor protein, it controls the translation of the L11 operon by binding to its mRNA. This is Large ribosomal subunit protein uL1 from Fusobacterium nucleatum subsp. nucleatum (strain ATCC 25586 / DSM 15643 / BCRC 10681 / CIP 101130 / JCM 8532 / KCTC 2640 / LMG 13131 / VPI 4355).